Consider the following 151-residue polypeptide: Deoxyuridine 5'-triphosphate nucleotidohydrolase (151 aa).

Residues 70–72, N83, 87–89, and M97 each bind substrate; these read RSG and LID.

This sequence belongs to the dUTPase family. It depends on Mg(2+) as a cofactor.

It catalyses the reaction dUTP + H2O = dUMP + diphosphate + H(+). It participates in pyrimidine metabolism; dUMP biosynthesis; dUMP from dCTP (dUTP route): step 2/2. Functionally, this enzyme is involved in nucleotide metabolism: it produces dUMP, the immediate precursor of thymidine nucleotides and it decreases the intracellular concentration of dUTP so that uracil cannot be incorporated into DNA. This chain is Deoxyuridine 5'-triphosphate nucleotidohydrolase, found in Glaesserella parasuis serovar 5 (strain SH0165) (Haemophilus parasuis).